A 91-amino-acid polypeptide reads, in one-letter code: Probable Fe(2+)-trafficking protein (91 aa).

This sequence belongs to the Fe(2+)-trafficking protein family. Monomer.

Could be a mediator in iron transactions between iron acquisition and iron-requiring processes, such as synthesis and/or repair of Fe-S clusters in biosynthetic enzymes. This Escherichia coli O7:K1 (strain IAI39 / ExPEC) protein is Probable Fe(2+)-trafficking protein.